Here is a 93-residue protein sequence, read N- to C-terminus: Integration host factor subunit beta (93 aa).

This sequence belongs to the bacterial histone-like protein family. In terms of assembly, heterodimer of an alpha and a beta chain.

This protein is one of the two subunits of integration host factor, a specific DNA-binding protein that functions in genetic recombination as well as in transcriptional and translational control. This Vibrio parahaemolyticus serotype O3:K6 (strain RIMD 2210633) protein is Integration host factor subunit beta.